The primary structure comprises 137 residues: Small ribosomal subunit protein bS16m (137 aa).

The transit peptide at 1–34 (MVHLTTLLCKAYRGGHLTIRLALGGCTNRPFYRI) directs the protein to the mitochondrion. Residue Thr130 is modified to Phosphothreonine.

It belongs to the bacterial ribosomal protein bS16 family. As to quaternary structure, component of the mitochondrial small ribosomal subunit (mt-SSU). Mature mammalian 55S mitochondrial ribosomes consist of a small (28S) and a large (39S) subunit. The 28S small subunit contains a 12S ribosomal RNA (12S mt-rRNA) and 30 different proteins. The 39S large subunit contains a 16S rRNA (16S mt-rRNA), a copy of mitochondrial valine transfer RNA (mt-tRNA(Val)), which plays an integral structural role, and 52 different proteins. bS16m has a zinc binding site.

It is found in the mitochondrion. The polypeptide is Small ribosomal subunit protein bS16m (MRPS16) (Homo sapiens (Human)).